Consider the following 247-residue polypeptide: 3-deoxy-manno-octulosonate cytidylyltransferase (247 aa).

It belongs to the KdsB family.

It localises to the cytoplasm. The enzyme catalyses 3-deoxy-alpha-D-manno-oct-2-ulosonate + CTP = CMP-3-deoxy-beta-D-manno-octulosonate + diphosphate. It participates in nucleotide-sugar biosynthesis; CMP-3-deoxy-D-manno-octulosonate biosynthesis; CMP-3-deoxy-D-manno-octulosonate from 3-deoxy-D-manno-octulosonate and CTP: step 1/1. The protein operates within bacterial outer membrane biogenesis; lipopolysaccharide biosynthesis. In terms of biological role, activates KDO (a required 8-carbon sugar) for incorporation into bacterial lipopolysaccharide in Gram-negative bacteria. This is 3-deoxy-manno-octulosonate cytidylyltransferase from Methylobacterium radiotolerans (strain ATCC 27329 / DSM 1819 / JCM 2831 / NBRC 15690 / NCIMB 10815 / 0-1).